Reading from the N-terminus, the 266-residue chain is 2-hydroxyisocaproyl-CoA dehydratase activator (266 aa).

Residues 10-14 (STASK) and 102-104 (GQD) contribute to the ATP site. Position 125 (Cys125) interacts with [4Fe-4S] cluster. An ATP-binding site is contributed by Asp134. Cys164 provides a ligand contact to [4Fe-4S] cluster. Residues Gly215 and Gln241 each contribute to the ATP site.

Belongs to the HadI activator family. As to quaternary structure, homodimer. It depends on [4Fe-4S] cluster as a cofactor.

Involved in the reductive branch of L-leucine fermentation. Required for the activation of (R)-2-hydroxyisocaproyl-CoA dehydratase. The reduced activator transfers one electron to the dehydratase concomitant with hydrolysis of ATP. This protein is extremely sensitive towards oxygen. The polypeptide is 2-hydroxyisocaproyl-CoA dehydratase activator (Clostridioides difficile (Peptoclostridium difficile)).